A 469-amino-acid polypeptide reads, in one-letter code: Argininosuccinate lyase (469 aa).

It belongs to the lyase 1 family. Argininosuccinate lyase subfamily.

The protein resides in the cytoplasm. The catalysed reaction is 2-(N(omega)-L-arginino)succinate = fumarate + L-arginine. Its pathway is amino-acid biosynthesis; L-arginine biosynthesis; L-arginine from L-ornithine and carbamoyl phosphate: step 3/3. The polypeptide is Argininosuccinate lyase (Polaromonas naphthalenivorans (strain CJ2)).